The sequence spans 745 residues: ATP-dependent zinc metalloprotease FtsH (745 aa).

Topologically, residues 1-11 are cytoplasmic; the sequence is MNNRRNGLFRN. A helical membrane pass occupies residues 12–32; that stretch reads SLFYILMFLSLMGIIYFFFGG. Topologically, residues 33 to 131 are extracellular; sequence NSGSQTQNIR…VTAKAEESSG (99 aa). Residues 132 to 152 traverse the membrane as a helical segment; that stretch reads IWVTLLMYIAPVILMLFLFYM. The Cytoplasmic segment spans residues 153–745; the sequence is MMGQAGQGGG…SSQDDTNSQA (593 aa). 227–234 provides a ligand contact to ATP; that stretch reads GPPGTGKT. His449 provides a ligand contact to Zn(2+). Glu450 is a catalytic residue. Positions 453 and 525 each coordinate Zn(2+). Residues 630–673 are compositionally biased toward basic and acidic residues; sequence MPEKDSNEFPSEKAATFEESKRELERREAEKHAQNQSADDKQAD. The segment at 630 to 745 is disordered; sequence MPEKDSNEFP…SSQDDTNSQA (116 aa). Residues 690–704 are compositionally biased toward low complexity; it reads SESDASSEVSADSSV. The segment covering 705–745 has biased composition (polar residues); that stretch reads NSTANSATESATDSDVATSATGLPNAESATPSSQDDTNSQA.

The protein in the central section; belongs to the AAA ATPase family. This sequence in the C-terminal section; belongs to the peptidase M41 family. Homohexamer. The cofactor is Zn(2+).

Its subcellular location is the cell membrane. Functionally, acts as a processive, ATP-dependent zinc metallopeptidase for both cytoplasmic and membrane proteins. Plays a role in the quality control of integral membrane proteins. This Lactiplantibacillus plantarum (strain ATCC BAA-793 / NCIMB 8826 / WCFS1) (Lactobacillus plantarum) protein is ATP-dependent zinc metalloprotease FtsH.